The following is a 667-amino-acid chain: Probable E3 ubiquitin-protein ligase HIP1 (667 aa).

2 disordered regions span residues 142-163 and 285-311; these read NGASQGSELHGGCSHTGSNGQA and TTAGLSSSSYDPSGGNNNSGGSQRSFR. Residues 288 to 309 are compositionally biased toward low complexity; sequence GLSSSSYDPSGGNNNSGGSQRS. The RING-type; atypical zinc finger occupies 620–661; that stretch reads CCICQEEYVDGDDLGTLDCGHDFHVGCVRQWLVVKNTCPICK.

This sequence belongs to the RING-type zinc finger family. As to quaternary structure, interacts with HAL3.

The enzyme catalyses S-ubiquitinyl-[E2 ubiquitin-conjugating enzyme]-L-cysteine + [acceptor protein]-L-lysine = [E2 ubiquitin-conjugating enzyme]-L-cysteine + N(6)-ubiquitinyl-[acceptor protein]-L-lysine.. Its pathway is protein modification; protein ubiquitination. Its function is as follows. Probable E3 ubiquitin-protein ligase that functions downstream of HAL3 and is required for HAL3-regulated plant growth. Activation of HIP1 by HAL3 may lead to the degradation of cell cycle suppressors, resulting in enhancement of cell division and plant growth. The chain is Probable E3 ubiquitin-protein ligase HIP1 (HIP1) from Oryza sativa subsp. japonica (Rice).